We begin with the raw amino-acid sequence, 184 residues long: Photosystem I assembly protein Ycf4 (184 aa).

The next 2 helical transmembrane spans lie at 22–42 and 57–77; these read FFWA…GTSS and ILFF…LFIS.

It belongs to the Ycf4 family.

Its subcellular location is the plastid. It localises to the chloroplast thylakoid membrane. Seems to be required for the assembly of the photosystem I complex. This chain is Photosystem I assembly protein Ycf4, found in Nandina domestica (Heavenly bamboo).